The primary structure comprises 290 residues: Nucleotide-binding protein XF_1405 (290 aa).

Residue 13–20 (GLSGSGKS) participates in ATP binding. 65–68 (DIRS) is a GTP binding site.

The protein belongs to the RapZ-like family.

Its function is as follows. Displays ATPase and GTPase activities. The sequence is that of Nucleotide-binding protein XF_1405 from Xylella fastidiosa (strain 9a5c).